The primary structure comprises 181 residues: Adenine phosphoribosyltransferase (181 aa).

This sequence belongs to the purine/pyrimidine phosphoribosyltransferase family. As to quaternary structure, homodimer.

Its subcellular location is the cytoplasm. It carries out the reaction AMP + diphosphate = 5-phospho-alpha-D-ribose 1-diphosphate + adenine. It participates in purine metabolism; AMP biosynthesis via salvage pathway; AMP from adenine: step 1/1. Its function is as follows. Catalyzes a salvage reaction resulting in the formation of AMP, that is energically less costly than de novo synthesis. This Mesorhizobium japonicum (strain LMG 29417 / CECT 9101 / MAFF 303099) (Mesorhizobium loti (strain MAFF 303099)) protein is Adenine phosphoribosyltransferase.